Here is a 348-residue protein sequence, read N- to C-terminus: Large ribosomal subunit protein uL10 (348 aa).

The tract at residues 291-348 (LPEELRGVSAADTGAAEEEESTDEEAADADQADAAEDDDAADDDGDDEDAGDALGSLF) is disordered. Acidic residues predominate over residues 305–341 (AAEEEESTDEEAADADQADAAEDDDAADDDGDDEDAG).

The protein belongs to the universal ribosomal protein uL10 family. Part of the 50S ribosomal subunit. Forms part of the ribosomal stalk which helps the ribosome interact with GTP-bound translation factors. Forms a heptameric L10(L12)2(L12)2(L12)2 complex, where L10 forms an elongated spine to which the L12 dimers bind in a sequential fashion.

Its function is as follows. Forms part of the ribosomal stalk, playing a central role in the interaction of the ribosome with GTP-bound translation factors. This chain is Large ribosomal subunit protein uL10, found in Haloferax volcanii (strain ATCC 29605 / DSM 3757 / JCM 8879 / NBRC 14742 / NCIMB 2012 / VKM B-1768 / DS2) (Halobacterium volcanii).